Reading from the N-terminus, the 37-residue chain is Potassium channel toxin alpha-KTx 3.13 (37 aa).

3 disulfide bridges follow: Cys7-Cys27, Cys13-Cys32, and Cys17-Cys34. Residue Lys37 is modified to Lysine amide.

It belongs to the short scorpion toxin superfamily. Potassium channel inhibitor family. Alpha-KTx 03 subfamily. In terms of tissue distribution, expressed by the venom gland.

The protein resides in the secreted. Its function is as follows. Blocks voltage-gated potassium channels Kv1.1/KCNA1 (IC(50)=203.15 pM), Kv1.2/KCNA2 (IC(50)=8.92 nM) from rat and human Kv1.3 KCNA3/KCNA3 (IC(50)=171 pM) potently. At 2 uM, also blocks Shaker IR and has a moderate effect on rat Kv1.6/KCNA6. This is Potassium channel toxin alpha-KTx 3.13 from Mesobuthus eupeus (Lesser Asian scorpion).